We begin with the raw amino-acid sequence, 770 residues long: Protein PAT1 homolog 1 (770 aa).

The disordered stretch occupies residues 1-26 (MFRYESLEDCPLDEDEDAFQGLGEED). A region A; interaction with DDX6/RCK region spans residues 1-84 (MFRYESLEDC…EMDLLGDHEE (84 aa)). The segment at 1–397 (MFRYESLEDC…HRSSHQDHLR (397 aa)) is involved in nuclear foci localization. Residues 7 to 26 (LEDCPLDEDEDAFQGLGEED) are compositionally biased toward acidic residues. The segment at 85–388 (NLAERLSKMV…LNGAGDRGSH (304 aa)) is region N; interaction with decapping machinery. The Nuclear export signal signature appears at 86–95 (LAERLSKMVI). A Phosphoserine modification is found at serine 177. Threonine 178 carries the post-translational modification Phosphothreonine. 2 positions are modified to phosphoserine: serine 179 and serine 184. A Phosphothreonine modification is found at threonine 194. Residues arginine 217, arginine 223, and arginine 263 each carry the asymmetric dimethylarginine modification. An involved in RNA-binding region spans residues 223–397 (RYPAPYGERM…HRSSHQDHLR (175 aa)). Residue serine 278 is modified to Phosphoserine. The residue at position 284 (arginine 284) is an Asymmetric dimethylarginine. 2 disordered regions span residues 315–344 (FRAF…QNLR) and 360–400 (QHRR…RKDP). Pro residues predominate over residues 324–337 (SATPPPQQHPPGPG). A compositionally biased stretch (low complexity) spans 367 to 380 (QRQQQNRNQHRNLN). Position 385 is an omega-N-methylarginine (arginine 385). The segment covering 385–400 (RGSHRSSHQDHLRKDP) has biased composition (basic and acidic residues). Residues 389–448 (RSSHQDHLRKDPYANLMLQREKDWVSKIQMMQLQSTDPYLDDFYYQNYFEKLEKLSAAEE) are region H. The tract at residues 398–770 (KDPYANLMLQ…TKLQLVQGIR (373 aa)) is involved in nuclear speckle localization. Positions 449-770 (IQGDGPKKER…TKLQLVQGIR (322 aa)) are region C.

The protein belongs to the PAT1 family. Interacts (via region A) with DDX6/RCK. Interacts (via region H and region C) with LSM1 and LSM4. Interacts (via region N) with DCP1A, DCP2, EDC3, EDC4 and XRN1. Interacts with the CCR4-NOT complex. Interacts with the Lsm-containing SMN-Sm protein complex. Interacts with EIF4ENIF1/4E-T.

Its subcellular location is the cytoplasm. It is found in the P-body. The protein resides in the nucleus. It localises to the PML body. The protein localises to the nucleus speckle. In terms of biological role, RNA-binding protein involved in deadenylation-dependent decapping of mRNAs, leading to the degradation of mRNAs. Acts as a scaffold protein that connects deadenylation and decapping machinery. Required for cytoplasmic mRNA processing body (P-body) assembly. The chain is Protein PAT1 homolog 1 (PATL1) from Pongo abelii (Sumatran orangutan).